Reading from the N-terminus, the 1381-residue chain is DNA-directed RNA polymerase subunit beta'' (1381 aa).

Zn(2+) contacts are provided by Cys224, Cys295, Cys302, and Cys305.

It belongs to the RNA polymerase beta' chain family. RpoC2 subfamily. In terms of assembly, in plastids the minimal PEP RNA polymerase catalytic core is composed of four subunits: alpha, beta, beta', and beta''. When a (nuclear-encoded) sigma factor is associated with the core the holoenzyme is formed, which can initiate transcription. Zn(2+) is required as a cofactor.

Its subcellular location is the plastid. It is found in the chloroplast. The enzyme catalyses RNA(n) + a ribonucleoside 5'-triphosphate = RNA(n+1) + diphosphate. Functionally, DNA-dependent RNA polymerase catalyzes the transcription of DNA into RNA using the four ribonucleoside triphosphates as substrates. This is DNA-directed RNA polymerase subunit beta'' from Guizotia abyssinica (Niger).